A 160-amino-acid chain; its full sequence is 6,7-dimethyl-8-ribityllumazine synthase (160 aa).

Residues F32, 66–68 (ALE), and 90–92 (CII) each bind 5-amino-6-(D-ribitylamino)uracil. 95 to 96 (ET) lines the (2S)-2-hydroxy-3-oxobutyl phosphate pocket. H98 (proton donor) is an active-site residue. N123 is a 5-amino-6-(D-ribitylamino)uracil binding site. R137 lines the (2S)-2-hydroxy-3-oxobutyl phosphate pocket.

The protein belongs to the DMRL synthase family.

It carries out the reaction (2S)-2-hydroxy-3-oxobutyl phosphate + 5-amino-6-(D-ribitylamino)uracil = 6,7-dimethyl-8-(1-D-ribityl)lumazine + phosphate + 2 H2O + H(+). Its pathway is cofactor biosynthesis; riboflavin biosynthesis; riboflavin from 2-hydroxy-3-oxobutyl phosphate and 5-amino-6-(D-ribitylamino)uracil: step 1/2. Its function is as follows. Catalyzes the formation of 6,7-dimethyl-8-ribityllumazine by condensation of 5-amino-6-(D-ribitylamino)uracil with 3,4-dihydroxy-2-butanone 4-phosphate. This is the penultimate step in the biosynthesis of riboflavin. In Methylibium petroleiphilum (strain ATCC BAA-1232 / LMG 22953 / PM1), this protein is 6,7-dimethyl-8-ribityllumazine synthase.